Here is a 330-residue protein sequence, read N- to C-terminus: Uracil-DNA glycosylase, mitochondrial (330 aa).

Residues 1 to 49 constitute a mitochondrion transit peptide; the sequence is MASSTPKTLMDFFQPAKRLKASPSSSSFPAVSVAGGSRDLGSVANSPPR. D173 serves as the catalytic Proton acceptor.

The protein belongs to the uracil-DNA glycosylase (UDG) superfamily. UNG family.

Its subcellular location is the mitochondrion. It catalyses the reaction Hydrolyzes single-stranded DNA or mismatched double-stranded DNA and polynucleotides, releasing free uracil.. With respect to regulation, inhidited by the small peptide uracil-DNA-glycosylase inhibitor (Ugi). Excises uracil residues from the DNA which can arise as a result of misincorporation of dUMP residues by DNA polymerase or due to deamination of cytosine. More active on U:G, U:T and U:C mispairs than on U:A pairs. Highly specific for uracil and no activity with 5-substituted uracil or cytosine derivatives. Required for initiation of base excision repair (BER) of uracil. The chain is Uracil-DNA glycosylase, mitochondrial from Arabidopsis thaliana (Mouse-ear cress).